The following is a 236-amino-acid chain: Ras-related protein RabY (236 aa).

18–25 (GDRKTGKT) contributes to the GTP binding site. The Effector region signature appears at 40–48 (YRQTNLLHF). GTP contacts are provided by residues 66 to 70 (DSQAD) and 126 to 129 (NKSD). Over residues 192–225 (QQQQQQQQQQQQQQQQQQQQQQQQQQQQQQQHQQ) the composition is skewed to low complexity. Positions 192-236 (QQQQQQQQQQQQQQQQQQQQQQQQQQQQQQQHQQSSKTKIGCLIQ) are disordered. Position 233 is a cysteine methyl ester (Cys-233). Cys-233 is lipidated: S-geranylgeranyl cysteine. A propeptide spans 234-236 (LIQ) (removed in mature form).

Belongs to the small GTPase superfamily. Rab family.

The protein resides in the cell membrane. The polypeptide is Ras-related protein RabY (rabY) (Dictyostelium discoideum (Social amoeba)).